The following is a 1106-amino-acid chain: MAAGRPLAWTLTLWQAWLILIGPSSEEPFPSAVTIKSWVDKMQEDLVTLAKTASGVHQLVDIYEKYQDLYTVEPNNARQLVEIAARDIEKLLSNRSKALVRLALEAEKVQAAHQWREDFASNEVVYYNAKDDLDPEKNDSEPGSQRIKPVFIDDANFRRQVSYQHAAVHIPTDIYEGSTIVLNELNWTSALDDVFKKNREEDPSLLWQVFGSATGLARYYPASPWVDNSRTPNKIDLYDVRRRPWYIQGAASPKDMLILVDVSGSVSGLTLKLIRTSVSEMLETLSDDDFVNVASFNSNAQDVSCFQHLVQANVRNKKVLKDAVNNITAKGITDYKKGFSFAFEQLLNYNVSRANCNKIIMLFTDGGEERAQEIFAKYNKDKKVRVFTFSVGQHNYDRGPIQWMACENKGYYYEIPSIGAIRINTQEYLDVLGRPMVLAGDKAKQVQWTNVYLDALELGLVITGTLPVFNITGQFENKTNLKNQLILGVMGVDVSLEDIKRLTPRFTLCPNGYYFAIDPNGYVLLHPNLQPKPIGVGIPTINLRKRRPNVQNPKSQEPVTLDFLDAELENDIKVEIRNKMIDGESGEKTFRTLVKSQDERYIDKGNRTYTWTPVNGTDYSSLALVLPTYSFYYIKAKIEETITQARYSETLKPDNFEESGYTFLAPRDYCSDLKPSDNNTEFLLNFNEFIDRKTPNNPSCNTDLINRVLLDAGFTNELVQNYWSKQKNIKGVKARFVVTDGGITRVYPKEAGENWQENPETYEDSFYKRSLDNDNYVFTAPYFNKSGPGAYESGIMVSKAVEIYIQGKLLKPAVVGIKIDVNSWIENFTKTSIRDPCAGPVCDCKRNSDVMDCVILDDGGFLLMANHDDYTNQIGRFFGEIDPSLMRHLVNISVYAFNKSYDYQSVCEPGAAPKQGAGHRSAYVPSIADILQIGWWATAAAWSILQQFLLSLTFPRLLEAADMEDDDFTASMSKQSCITEQTQYFFDNDSKSFSGVLDCGNCSRIFHVEKLMNTNLIFIMVESKGTCPCDTRLLIQAEQTSDGPDPCDMVKQPRYRKGPDVCFDNNVLEDYTDCGGVSGLNPSLWSIIGIQFVLLWLVSGSRHCLL.

The N-terminal stretch at 1-26 is a signal peptide; the sequence is MAAGRPLAWTLTLWQAWLILIGPSSE. Over 27–1076 the chain is Extracellular; the sequence is EPFPSAVTIK…VLEDYTDCGG (1050 aa). Asparagine 94 carries N-linked (GlcNAc...) asparagine glycosylation. Phosphoserine is present on serine 121. 2 N-linked (GlcNAc...) asparagine glycosylation sites follow: asparagine 138 and asparagine 186. Residues 255-432 form the VWFA domain; sequence DMLILVDVSG…INTQEYLDVL (178 aa). Aspartate 261, serine 263, and serine 265 together coordinate a divalent metal cation. Positions 261-265 match the MIDAS-like motif motif; sequence DVSGS. Residues asparagine 326 and asparagine 350 are each glycosylated (N-linked (GlcNAc...) asparagine). Cysteines 406 and 1062 form a disulfide. The Cache domain occupies 448 to 539; that stretch reads WTNVYLDALE…QPKPIGVGIP (92 aa). N-linked (GlcNAc...) asparagine glycans are attached at residues asparagine 615, asparagine 784, and asparagine 891. A helical transmembrane segment spans residues 1077-1097; it reads VSGLNPSLWSIIGIQFVLLWL. At 1098-1106 the chain is on the cytoplasmic side; it reads VSGSRHCLL.

Belongs to the calcium channel subunit alpha-2/delta family. As to quaternary structure, dimer formed of alpha-2-1 and delta-1 chains; disulfide-linked. Voltage-dependent calcium channels are multisubunit complexes, consisting of alpha-1 (CACNA1), alpha-2 (CACNA2D), beta (CACNB) and delta (CACNA2D) subunits in a 1:1:1:1 ratio. Proteolytically processed into subunits alpha-2-1 and delta-1 that are disulfide-linked. As to expression, skeletal muscle.

The protein resides in the membrane. It is found in the cell membrane. Its function is as follows. The alpha-2/delta subunit of voltage-dependent calcium channels regulates calcium current density and activation/inactivation kinetics of the calcium channel. Plays an important role in excitation-contraction coupling. This chain is Voltage-dependent calcium channel subunit alpha-2/delta-1 (CACNA2D1), found in Oryctolagus cuniculus (Rabbit).